The sequence spans 294 residues: Phosphatidylserine decarboxylase proenzyme (294 aa).

Active-site charge relay system; for autoendoproteolytic cleavage activity residues include D92, H149, and S252. Residue S252 is the Schiff-base intermediate with substrate; via pyruvic acid; for decarboxylase activity of the active site. The residue at position 252 (S252) is a Pyruvic acid (Ser); by autocatalysis.

The protein belongs to the phosphatidylserine decarboxylase family. PSD-B subfamily. Prokaryotic type I sub-subfamily. In terms of assembly, heterodimer of a large membrane-associated beta subunit and a small pyruvoyl-containing alpha subunit. Pyruvate serves as cofactor. In terms of processing, is synthesized initially as an inactive proenzyme. Formation of the active enzyme involves a self-maturation process in which the active site pyruvoyl group is generated from an internal serine residue via an autocatalytic post-translational modification. Two non-identical subunits are generated from the proenzyme in this reaction, and the pyruvate is formed at the N-terminus of the alpha chain, which is derived from the carboxyl end of the proenzyme. The autoendoproteolytic cleavage occurs by a canonical serine protease mechanism, in which the side chain hydroxyl group of the serine supplies its oxygen atom to form the C-terminus of the beta chain, while the remainder of the serine residue undergoes an oxidative deamination to produce ammonia and the pyruvoyl prosthetic group on the alpha chain. During this reaction, the Ser that is part of the protease active site of the proenzyme becomes the pyruvoyl prosthetic group, which constitutes an essential element of the active site of the mature decarboxylase.

The protein resides in the cell membrane. It catalyses the reaction a 1,2-diacyl-sn-glycero-3-phospho-L-serine + H(+) = a 1,2-diacyl-sn-glycero-3-phosphoethanolamine + CO2. Its pathway is phospholipid metabolism; phosphatidylethanolamine biosynthesis; phosphatidylethanolamine from CDP-diacylglycerol: step 2/2. In terms of biological role, catalyzes the formation of phosphatidylethanolamine (PtdEtn) from phosphatidylserine (PtdSer). The sequence is that of Phosphatidylserine decarboxylase proenzyme from Bordetella avium (strain 197N).